A 2026-amino-acid chain; its full sequence is MASTPSSGSYDLAIVTPTEDHSLRSFSLSQGNVQQTFLVSTQDGAFLDQQKASFLQSYSKDQSILGLVFEFLQFLLDEACPPAPLGAFLGAIESQCVRDANIHDLIVSEPEAKNIIRTYYRAHAVAGLNPRPAPSGLFSTVNIEAHRILMAFGGQGSTNLVCVDELADLYSLYQPLLEPLIASVAPALASLSREPSTLQHYLGREIDLYSWLTIPESRPDRAFTATAAVSFPIIGLLDMAHYYVLGKLLDSDSPKRLRSALQGLTGHSQGIIVAAAVAQADTWASFLAQAQWAIRLLFWMGYECHTAAPASPLSSAAIRDSIEHGEGSPSWLLSVRGLRSPALDALITDCNRRLPESEHLSIGLINTERNIVVAGSPRSLRGLCLRLREIEADDGQDQSRVPFRQRKPVVHHTFLPVSAPFHSSHLRAAADRVKERFPDASSPQVGDLLTAVYHTRTGQDMREMFSPSNNLIHSLVEAVACETVDWPATLQVSRSKPPSHIVLLSSSRLSDLVSEIVDGRGVRIIAGTVLAPTDPAVLGGKAELLTTKPSQAPTPWAELFKARLVAGPDGRPILETRLSQLLQAPPIITAGMTPTTVHWDFVAAVMQAGYHVELAGGGYFDAAGMTTAIEKLAAHVPPGRGITCNLIYASPHSIAFQIPLIRSMIQRGIPIDGLTIGAGVPSQDVVNEWIQTLGIKHLSLKPGSIAAIYEVIEIAKKHPTFPIILQWTGGRGGGHHSCEDFHEPLLQTYRDIRRCSNLYLVVGSGFGQADQMHPYITGEWSLSFGRPVMPCDGILIGSRMMVAREAHTSPQAKELILAAAGVADSEWEQSFKKPTGGVLTVQSEMGQPIHKLATRGVRLWHEMDKTIFSLPRDKRVAALNARKAEIIRRLSADFAKPWFGYNAAGDAVDLEDMTYTEVIARLIRLVYVSHQHRWIDPSYRQLVLDFTYRTLERVSNADYATDKLDLSQPEQFVEQVQQLCPAATTRRLHPDDVRFFLTICKQRGRKPVNFIPALDEDFEYWFKKDSLWQSEDVDSIIDQDADRVCILQGPVAVQYSRRADQSAREILDEIHHGLANHFEEGPSQSDRPSLAISEMVSARVTVTESNTHRIIRPTSESLPSVEDWQAFLASQVTGSVRSAIMAEEVLRGSQRQANPLRRVLEPRTGQSIQIPLDGRDLRLVEDAKNRPLVHIKPSGDQEVAVDFYYYDFVETPGNLRFTYKFDSKSLSLVENLDGRDDRVKLFYAHLWLGRADLSYHRLSEVFEGEEITLSSDLHRHLHNALRHTVPDATASATTNTLPLEAAIIAAWKPLMEPLFVAELQGDLLRLVHLSNSIRYTPGAAPLEVNDVVATKSQVRAVTIKETGKTISVEAQIFRSKTLVATVTSEFFIKGSFSDYETTFSHQDEAAIELKVQSAIDEALLRDREWFLLDDPTQSLIDKTLVFRLHTVTRWKDQSTFTSLKTTGSIYTKHWNGTEQKVGTVASEVVECHGNPVIDFLQRKGTVVQEKVPLKHPGLIDNGSRTIRLPLDNALYSSVSKDYNPIHTSSVFARFADLPGTITHGMYTAAVSRAVTECLAADGETGRLRSFSASFVGMVLPGDQLTVRIRHEAMCHGRMVLSVAAYREGTDEKVLQGEAEVEQRTSAYLFTGQGSQAQNMGMQLYDSSAVARSVWDEVDRRLLDQYGWSILNVVRANPKQITIHFRGARGRRIRDNYLAMRTETRMPDGSTRLEPILRDLTAKSESYTFFDSRGLLYATQFAQPAILLMEKAAFEDMKANGLIQEGAAFAGHSLGEYGVLASLVDFLPFEMMMSVVFYRGLVMQFTMERDSNGHTGFSMVAVSPKRVGKYFDEAMLRIVVDLIHRQSGKLLEIVNFNVEAEQYVCAGHVRNIYILSGILDLLSRSATGPQLVASLRSASDPAITDVAKEIAVYLEKAPQLNNPTELKRGRATIPLQGIDVPFHSSHLRSGVSVYRRFLEERIQAENVQVDRLVGKFIPNVMGKPFAIDRSYLEEAAAVTGSSVLRELALAA.

Residues 148–526 (ILMAFGGQGS…VDGRGVRIIA (379 aa)) form an acetyltransferase (AT) domain region. Serine 268 serves as the catalytic For acetyltransferase activity. The interval 579–824 (SQLLQAPPII…LILAAAGVAD (246 aa)) is enoyl reductase (ER) domain. A dehydratase (DH) domain region spans residues 1130-1604 (SQVTGSVRSA…LPGDQLTVRI (475 aa)). The MaoC-like domain occupies 1512-1625 (PGLIDNGSRT…LSVAAYREGT (114 aa)). The interval 1643–2016 (YLFTGQGSQA…LEEAAAVTGS (374 aa)) is malonyl/palmitoyl transferase (MT/PT) domain. The active-site For malonyltransferase activity is serine 1788.

It belongs to the fungal fatty acid synthetase subunit beta family. [Alpha(6)beta(6)] hexamers of two multifunctional subunits (alpha and beta).

It carries out the reaction acetyl-CoA + n malonyl-CoA + 2n NADPH + 4n H(+) = a long-chain-acyl-CoA + n CoA + n CO2 + 2n NADP(+).. The catalysed reaction is holo-[ACP] + acetyl-CoA = acetyl-[ACP] + CoA. The enzyme catalyses holo-[ACP] + malonyl-CoA = malonyl-[ACP] + CoA. It catalyses the reaction a (3R)-hydroxyacyl-[ACP] = a (2E)-enoyl-[ACP] + H2O. It carries out the reaction a 2,3-saturated acyl-[ACP] + NAD(+) = a (2E)-enoyl-[ACP] + NADH + H(+). The catalysed reaction is (9Z)-octadecenoyl-[ACP] + H2O = (9Z)-octadecenoate + holo-[ACP] + H(+). The protein operates within secondary metabolite biosynthesis. Its function is as follows. Fatty acid synthase beta subunit; part of the gene cluster that mediates the biosynthesis of oryzines, natural products with an unusual maleidride backbone. The two subunits of the fungal fatty acid synthase oryfasA and oryfasB probably form octenoic acid. This fatty acid is most likely activated by the acyl-CoA ligase oryP to give octenyl-CoA before the citrate synthase-like protein oryE catalyzes condensation with oxaloacetate to form tricarboxylic acid. The next steps of the pathways are conjectural, but a favorite possible route has been proposed, beginning with decarboxylation and concomitant dehydration by the decarboxylase oryM, followed by tautomerization, which may lead to the production of a diene intermediate. Reduction of this diene intermediate could give the known metabolite piliformic acid. On the pathway to oryzine B and oryzine A, however, hydroxylation of the diene by the alpha-ketoglutarate-dependent dioxygenase oryG and lactonisation by the lactonohydrolases oryH or oryL could give oryzine B directly. Finally, enoyl reduction by the dehydrogenase oryD would then convert oryzine B into oryzine A. The chain is Fatty acid synthase subunit beta from Aspergillus oryzae (strain ATCC 42149 / RIB 40) (Yellow koji mold).